The sequence spans 252 residues: MITYEYPFNERIRTLLRLEDLFEKTAYFTQEDGALEHHAALVSMFEILEVAGRADLKMDLIQELERQRQTLLAFRNNPDISEEALSGALYEIEQSSAALLGMAGKIGQYLRENDWLMSIKSRAAIPGGVCEFDLPSYHWWLHRSPETRRDALEGWLKPMLPLRDAAAIVLRLLRSSGRPKNYTATNGQFQLNLGGSAAQMVRVTVHVDEQAIPEVSANKYFLNIRFTKPPAGEIKARGCERDVAFDLTFCNL.

This sequence belongs to the ZapD family. As to quaternary structure, interacts with FtsZ.

Its subcellular location is the cytoplasm. Cell division factor that enhances FtsZ-ring assembly. Directly interacts with FtsZ and promotes bundling of FtsZ protofilaments, with a reduction in FtsZ GTPase activity. In Dechloromonas aromatica (strain RCB), this protein is Cell division protein ZapD.